A 456-amino-acid polypeptide reads, in one-letter code: ATP synthase subunit beta 1 (456 aa).

An ATP-binding site is contributed by 152–159 (GGAGVGKS).

It belongs to the ATPase alpha/beta chains family. As to quaternary structure, F-type ATPases have 2 components, CF(1) - the catalytic core - and CF(0) - the membrane proton channel. CF(1) has five subunits: alpha(3), beta(3), gamma(1), delta(1), epsilon(1). CF(0) has three main subunits: a(1), b(2) and c(9-12). The alpha and beta chains form an alternating ring which encloses part of the gamma chain. CF(1) is attached to CF(0) by a central stalk formed by the gamma and epsilon chains, while a peripheral stalk is formed by the delta and b chains.

It is found in the cell membrane. It carries out the reaction ATP + H2O + 4 H(+)(in) = ADP + phosphate + 5 H(+)(out). Functionally, produces ATP from ADP in the presence of a proton gradient across the membrane. The catalytic sites are hosted primarily by the beta subunits. This is ATP synthase subunit beta 1 from Listeria innocua serovar 6a (strain ATCC BAA-680 / CLIP 11262).